The sequence spans 189 residues: Ribose 1,5-bisphosphate phosphokinase PhnN (189 aa).

10 to 17 contacts ATP; that stretch reads GPSGSGKD.

Belongs to the ribose 1,5-bisphosphokinase family.

It carries out the reaction alpha-D-ribose 1,5-bisphosphate + ATP = 5-phospho-alpha-D-ribose 1-diphosphate + ADP. The protein operates within metabolic intermediate biosynthesis; 5-phospho-alpha-D-ribose 1-diphosphate biosynthesis; 5-phospho-alpha-D-ribose 1-diphosphate from D-ribose 5-phosphate (route II): step 3/3. Functionally, catalyzes the phosphorylation of ribose 1,5-bisphosphate to 5-phospho-D-ribosyl alpha-1-diphosphate (PRPP). The sequence is that of Ribose 1,5-bisphosphate phosphokinase PhnN from Enterobacter lignolyticus (strain SCF1).